The primary structure comprises 710 residues: Probable threonine--tRNA ligase 1, cytoplasmic (710 aa).

Positions 1–35 are disordered; that stretch reads MSDSQENKPVETPTEVKPVAEKKPAAEKKEKKPAV. The segment covering 18-33 has biased composition (basic and acidic residues); the sequence is PVAEKKPAAEKKEKKP. Positions 72–137 constitute a TGS domain; the sequence is KEEPINVTLP…EADCNLQLCK (66 aa).

This sequence belongs to the class-II aminoacyl-tRNA synthetase family.

Its subcellular location is the cytoplasm. The catalysed reaction is tRNA(Thr) + L-threonine + ATP = L-threonyl-tRNA(Thr) + AMP + diphosphate + H(+). This Dictyostelium discoideum (Social amoeba) protein is Probable threonine--tRNA ligase 1, cytoplasmic (thrS1).